The chain runs to 164 residues: MANKLFLVCAALALCFLLTNASIYRTVVEFEEDDATNPIGPKMRKCRKEFQKEQHLRACQQLMLQQARQGRSDEFDFEDDMENPQGQQQEQQLFQQCCNELRQEEPDCVCPTLKQAAKAVRLQGQHQPMQVRKIYQTAKHLPNVCDIPQVDVCPFNIPSFPSFY.

The N-terminal stretch at 1 to 21 is a signal peptide; that stretch reads MANKLFLVCAALALCFLLTNA. Propeptides lie at residues 22–37, 74–83, and 163–164; these read SIYR…DATN, EFDFEDDMEN, and FY.

This sequence belongs to the 2S seed storage albumins family. In terms of assembly, the mature protein consists of a small and a large chain linked by disulfide bonds.

In terms of biological role, this is a 2S seed storage protein. The chain is 2S seed storage protein 1 (AT2S1) from Arabidopsis thaliana (Mouse-ear cress).